The chain runs to 298 residues: Tyrosine recombinase XerC (298 aa).

Residues 1–84 (MNHIQEAFLN…TLRTFYEYWM (84 aa)) enclose the Core-binding (CB) domain. A Tyr recombinase domain is found at 105-286 (YLPQFFYEEE…SNQQLRKVYL (182 aa)). Catalysis depends on residues R145, K169, H238, R241, and H264. Y273 acts as the O-(3'-phospho-DNA)-tyrosine intermediate in catalysis.

Belongs to the 'phage' integrase family. XerC subfamily. In terms of assembly, forms a cyclic heterotetrameric complex composed of two molecules of XerC and two molecules of XerD.

The protein resides in the cytoplasm. Its function is as follows. Site-specific tyrosine recombinase, which acts by catalyzing the cutting and rejoining of the recombining DNA molecules. The XerC-XerD complex is essential to convert dimers of the bacterial chromosome into monomers to permit their segregation at cell division. It also contributes to the segregational stability of plasmids. This is Tyrosine recombinase XerC from Staphylococcus aureus (strain Mu3 / ATCC 700698).